A 158-amino-acid chain; its full sequence is Ankyrin repeat domain-containing protein 37 (158 aa).

ANK repeat units follow at residues 1–25, 30–59, and 63–92; these read MLLL…SVNA, CEQS…DLNQ, and FGEA…QIDL. A Nuclear localization signal motif is present at residues 129 to 149; it reads EQPNKDHCVQVLRLKRSFGSE.

Post-translationally, ubiquitinated by the CRL2(FEM1B) complex, leading to its degradation.

It is found in the nucleus. The protein resides in the cytoplasm. The polypeptide is Ankyrin repeat domain-containing protein 37 (ANKRD37) (Bos taurus (Bovine)).